A 347-amino-acid chain; its full sequence is Probable dual-specificity RNA methyltransferase RlmN (347 aa).

Glu93 acts as the Proton acceptor in catalysis. In terms of domain architecture, Radical SAM core spans 99–333 (TEKRLTACLS…VSLRKSRGLD (235 aa)). Cys106 and Cys338 are disulfide-bonded. [4Fe-4S] cluster contacts are provided by Cys113, Cys117, and Cys120. S-adenosyl-L-methionine contacts are provided by residues 160-161 (GE), Ser190, 219-221 (SLH), and Asn295. Cys338 serves as the catalytic S-methylcysteine intermediate.

This sequence belongs to the radical SAM superfamily. RlmN family. It depends on [4Fe-4S] cluster as a cofactor.

It is found in the cytoplasm. The catalysed reaction is adenosine(2503) in 23S rRNA + 2 reduced [2Fe-2S]-[ferredoxin] + 2 S-adenosyl-L-methionine = 2-methyladenosine(2503) in 23S rRNA + 5'-deoxyadenosine + L-methionine + 2 oxidized [2Fe-2S]-[ferredoxin] + S-adenosyl-L-homocysteine. It catalyses the reaction adenosine(37) in tRNA + 2 reduced [2Fe-2S]-[ferredoxin] + 2 S-adenosyl-L-methionine = 2-methyladenosine(37) in tRNA + 5'-deoxyadenosine + L-methionine + 2 oxidized [2Fe-2S]-[ferredoxin] + S-adenosyl-L-homocysteine. Its function is as follows. Specifically methylates position 2 of adenine 2503 in 23S rRNA and position 2 of adenine 37 in tRNAs. The sequence is that of Probable dual-specificity RNA methyltransferase RlmN from Prochlorococcus marinus (strain MIT 9301).